A 1065-amino-acid chain; its full sequence is Presequence protease, mitochondrial (1065 aa).

A mitochondrion-targeting transit peptide spans Met-1–Ala-42. Zn(2+) is bound at residue His-117. The active-site Proton acceptor is Glu-120. Residue His-121 participates in Zn(2+) binding. The active site involves Glu-193. Position 230 (Glu-230) interacts with Zn(2+).

Belongs to the peptidase M16 family. PreP subfamily. Monomer and homodimer; homodimerization is induced by binding of the substrate. Requires Zn(2+) as cofactor.

The protein resides in the mitochondrion intermembrane space. Its subcellular location is the mitochondrion matrix. Its function is as follows. Degrades mitochondrial transit peptides after their cleavage in the intermembrane space or in the matrix, and presequence peptides; clearance of these peptides is required to keep the presequence processing machinery running. Preferentially cleaves the N-terminal side of paired basic amino acid residues. Also degrades other unstructured peptides. May function as an ATP-dependent peptidase as opposed to a metalloendopeptidase. The polypeptide is Presequence protease, mitochondrial (cym1) (Aspergillus fumigatus (strain ATCC MYA-4609 / CBS 101355 / FGSC A1100 / Af293) (Neosartorya fumigata)).